A 1550-amino-acid chain; its full sequence is Cellulose synthase 1 (1550 aa).

The segment at 1–741 (MPEVRSSTQS…KERVLKGTVK (741 aa)) is catalytic. 3 helical membrane passes run 26 to 46 (GAGL…TSVT), 47 to 67 (LPPE…FIVG), and 106 to 126 (GLLG…LFLS). The interval 147 to 240 (EWPTVDIFVP…YILIFDCDHV (94 aa)) is catalytic subdomain A. The active site involves Asp189. Asp236 and Asp238 together coordinate substrate. Positions 317 to 377 (TAIEQIGGFA…GQRVRWARGM (61 aa)) are catalytic subdomain B. Asp333 is a catalytic residue. 5 helical membrane-spanning segments follow: residues 398–418 (LCYL…IFLS), 423–443 (FLFF…AYAI), 468–488 (VYET…LLSP), 507–527 (FDLG…GGLA), and 547–567 (LLNS…IAVG). The PilZ domain maps to 572–647 (QKRNSHRIPA…PARIIRAGNG (76 aa)). Disordered regions lie at residues 708-731 (VHRS…NPSR) and 768-813 (APAH…QPLA). The segment at 742-1550 (MVSLLALLTF…KQLEDERRKS (809 aa)) is cyclic di-GMP binding domain. Low complexity predominate over residues 768-796 (APAHQPEASDLPPLPALLPATSGAAQAGS). Residues 1513–1533 (VLLVGLLGCILIVSVLARALA) form a helical membrane-spanning segment.

In the N-terminal section; belongs to the glycosyltransferase 2 family. The protein in the C-terminal section; belongs to the AcsB/BcsB family. Mg(2+) serves as cofactor.

The protein resides in the cell inner membrane. It carries out the reaction [(1-&gt;4)-beta-D-glucosyl](n) + UDP-alpha-D-glucose = [(1-&gt;4)-beta-D-glucosyl](n+1) + UDP + H(+). It functions in the pathway glycan metabolism; bacterial cellulose biosynthesis. Bifunctional protein comprised of a catalytic subunit and a regulatory subunit. The catalytic subunit of cellulose synthase polymerizes uridine 5'-diphosphate glucose to cellulose in a processive way. The thick cellulosic mats generated by this enzyme probably provide a specialized protective environment to the bacterium. The regulatory subunit binds bis-(3'-5') cyclic diguanylic acid (c-di-GMP). In Novacetimonas hansenii (Komagataeibacter hansenii), this protein is Cellulose synthase 1 (acsAB).